Here is a 393-residue protein sequence, read N- to C-terminus: tRNA(Met) cytidine acetate ligase (393 aa).

ATP-binding residues include glycine 81, asparagine 142, and arginine 167.

The protein belongs to the TmcAL family.

It localises to the cytoplasm. The enzyme catalyses cytidine(34) in elongator tRNA(Met) + acetate + ATP = N(4)-acetylcytidine(34) in elongator tRNA(Met) + AMP + diphosphate. Functionally, catalyzes the formation of N(4)-acetylcytidine (ac(4)C) at the wobble position of elongator tRNA(Met), using acetate and ATP as substrates. First activates an acetate ion to form acetyladenylate (Ac-AMP) and then transfers the acetyl group to tRNA to form ac(4)C34. The chain is tRNA(Met) cytidine acetate ligase from Bacillus anthracis (strain A0248).